A 107-amino-acid polypeptide reads, in one-letter code: Inner membrane protein YiaW (107 aa).

The Cytoplasmic segment spans residues methionine 1–phenylalanine 6. A helical membrane pass occupies residues alanine 7–proline 29. Residues tyrosine 30–alanine 43 lie on the Periplasmic side of the membrane. The helical transmembrane segment at isoleucine 44 to alanine 66 threads the bilayer. At threonine 67 to glutamate 107 the chain is on the cytoplasmic side.

This sequence to E.coli YibI.

Its subcellular location is the cell inner membrane. The chain is Inner membrane protein YiaW (yiaW) from Escherichia coli O157:H7.